Here is a 606-residue protein sequence, read N- to C-terminus: Aspartate--tRNA(Asp/Asn) ligase (606 aa).

Glu175 serves as a coordination point for L-aspartate. The aspartate stretch occupies residues 199-202; that stretch reads QLFK. Arg221 is a binding site for L-aspartate. ATP contacts are provided by residues 221-223 and Gln230; that span reads RDE. Residue His453 participates in L-aspartate binding. Glu487 lines the ATP pocket. Arg494 is an L-aspartate binding site. Residue 539–542 coordinates ATP; that stretch reads GWDR. A disordered region spans residues 564-606; sequence GGVDPLTDAPGTIPAEQRKETGVDFKPEKAAKAAQGEKAGKES. Over residues 579-594 the composition is skewed to basic and acidic residues; the sequence is EQRKETGVDFKPEKAA.

The protein belongs to the class-II aminoacyl-tRNA synthetase family. Type 1 subfamily. As to quaternary structure, homodimer.

It is found in the cytoplasm. It carries out the reaction tRNA(Asx) + L-aspartate + ATP = L-aspartyl-tRNA(Asx) + AMP + diphosphate. In terms of biological role, aspartyl-tRNA synthetase with relaxed tRNA specificity since it is able to aspartylate not only its cognate tRNA(Asp) but also tRNA(Asn). Reaction proceeds in two steps: L-aspartate is first activated by ATP to form Asp-AMP and then transferred to the acceptor end of tRNA(Asp/Asn). The protein is Aspartate--tRNA(Asp/Asn) ligase of Corynebacterium aurimucosum (strain ATCC 700975 / DSM 44827 / CIP 107346 / CN-1) (Corynebacterium nigricans).